Consider the following 130-residue polypeptide: Anti-adapter protein IraD (130 aa).

This sequence belongs to the GpW/Gp25 family. IraD subfamily. Interacts with RssB.

It is found in the cytoplasm. Its function is as follows. Inhibits RpoS proteolysis by regulating RssB activity, thereby increasing the stability of the sigma stress factor RpoS during oxidative stress. Its effect on RpoS stability is due to its interaction with RssB, which probably blocks the interaction of RssB with RpoS, and the consequent delivery of the RssB-RpoS complex to the ClpXP protein degradation pathway. The polypeptide is Anti-adapter protein IraD (Escherichia coli (strain K12 / MC4100 / BW2952)).